An 86-amino-acid chain; its full sequence is Teretoxin Tsu6.16 (86 aa).

An N-terminal signal peptide occupies residues 1-21; it reads MATSGRLLCVCLVMGLVFESL. The propeptide occupies 22 to 46; the sequence is GYLTGREKRPAENLEASVQRRWYLN.

It belongs to the teretoxin M (TM) superfamily. In terms of processing, contains 3 disulfide bonds. As to expression, expressed by the venom duct.

It is found in the secreted. This Terebra subulata (Chocolate spotted auger) protein is Teretoxin Tsu6.16.